The following is a 107-amino-acid chain: Class I hydrophobin hgfI (107 aa).

A signal peptide spans 1–24; that stretch reads MFSKLAIFATAAFAVLAAATPVRR. 4 cysteine pairs are disulfide-bonded: cysteine 27–cysteine 88, cysteine 34–cysteine 82, cysteine 35–cysteine 68, and cysteine 89–cysteine 102.

Belongs to the fungal hydrophobin family. In terms of assembly, self-assembles to form functional amyloid fibrils called rodlets with a length range 100-150 nm. Self-assembly into fibrillar rodlets occurs spontaneously at hydrophobic:hydrophilic interfaces and the rodlets further associate laterally to form amphipathic monolayers. In terms of tissue distribution, only weekly expressed in hyphae cultured in liquid medium.

It localises to the secreted. The protein localises to the cell wall. Its function is as follows. Aerial growth, conidiation, and dispersal of filamentous fungi in the environment rely upon a capability of their secreting small amphipathic proteins called hydrophobins (HPBs) with low sequence identity. Class I can self-assemble into an outermost layer of rodlet bundles on aerial cell surfaces, conferring cellular hydrophobicity that supports fungal growth, development and dispersal; whereas Class II form highly ordered films at water-air interfaces through intermolecular interactions but contribute nothing to the rodlet structure. HgfI is a class I hydrophobin that is involved in cell surface hydrophobicity and lowers the surface tension of water and change the nature of the surfaces to which it adsorbs. This is Class I hydrophobin hgfI from Grifola frondosa (Maitake).